The primary structure comprises 269 residues: RBPJ-interacting and tubulin-associated protein 1 (269 aa).

Positions 5–17 (VELAVSGMQTLGL) match the Nuclear export signal motif. Disordered stretches follow at residues 66 to 105 (VGKE…PISH) and 141 to 269 (LWTP…PPWK). Over residues 80–92 (CETTPSRGSTPTL) the composition is skewed to polar residues. A Nuclear localization signal motif is present at residues 92–108 (LTPRKKNKYRPISHTPS). The segment at 128–156 (RMAKGDAAKLRALLWTPPPTPRGSHSPRP) is interaction with RBPJ/RBPSUH. The segment at 156–269 (PREAPLRAIH…ATQKPKPPWK (114 aa)) is interaction with tubulin. Over residues 200–253 (HSLTHLNVPSTGHPATSAPHTNGPQDLRPSTSGVTFRSPLVTSRARSVSISVPS) the composition is skewed to polar residues.

This sequence belongs to the RITA family. Interacts with RBPJ/RBPSUH.

Its subcellular location is the cytoplasm. It is found in the nucleus. It localises to the cytoskeleton. The protein resides in the microtubule organizing center. The protein localises to the centrosome. Tubulin-binding protein that acts as a negative regulator of Notch signaling pathway. Shuttles between the cytoplasm and the nucleus and mediates the nuclear export of RBPJ/RBPSUH, thereby preventing the interaction between RBPJ/RBPSUH and NICD product of Notch proteins (Notch intracellular domain), leading to down-regulate Notch-mediated transcription. May play a role in neurogenesis. This Homo sapiens (Human) protein is RBPJ-interacting and tubulin-associated protein 1 (RITA1).